The primary structure comprises 87 residues: MSQAEFDKAAEEVKHLKTKPADEEMLFIYSHYKQATVGDINTERPGMLDFKGKAKWDAWNELKGTSKEDAMKAYIDKVEELKKKYGI.

The residue at position 2 (Ser-2) is an N-acetylserine. One can recognise an ACB domain in the interval 2-87; that stretch reads SQAEFDKAAE…VEELKKKYGI (86 aa). An N6-acetyllysine; alternate modification is found at Lys-8. Lys-8 is modified (N6-succinyllysine; alternate). Lys-14 lines the an acyl-CoA pocket. At Lys-17 the chain carries N6-succinyllysine. Lys-19 is subject to N6-acetyllysine. Phosphotyrosine is present on Tyr-29. An acyl-CoA is bound by residues 29-33, Lys-51, Lys-55, and Tyr-74; that span reads YSHYK. An N6-acetyllysine modification is found at Lys-51. Lys-55 is modified (N6-acetyllysine; alternate). Lys-55 is modified (N6-succinyllysine; alternate). Lys-55 is modified (N6-(2-hydroxyisobutyryl)lysine; alternate). Lys-55 is subject to N6-malonyllysine; alternate. The residue at position 77 (Lys-77) is an N6-acetyllysine; alternate. At Lys-77 the chain carries N6-succinyllysine; alternate.

This sequence belongs to the ACBP family. As to quaternary structure, monomer.

The protein resides in the endoplasmic reticulum. It localises to the golgi apparatus. Binds medium- and long-chain acyl-CoA esters with very high affinity and may function as an intracellular carrier of acyl-CoA esters. It is also able to displace diazepam from the benzodiazepine (BZD) recognition site located on the GABA type A receptor. It is therefore possible that this protein also acts as a neuropeptide to modulate the action of the GABA receptor. The chain is Acyl-CoA-binding protein (DBI) from Bos taurus (Bovine).